The primary structure comprises 202 residues: PXMP2/4 family protein 1 (202 aa).

The next 4 membrane-spanning stretches (helical) occupy residues 21-41, 54-72, 138-154, and 161-177; these read PVIT…TLAQ, LMMC…HFWF, KAWM…FRFV, and LISN…LSTV.

It belongs to the peroxisomal membrane protein PXMP2/4 family.

The protein resides in the membrane. This chain is PXMP2/4 family protein 1, found in Dictyostelium discoideum (Social amoeba).